Here is a 444-residue protein sequence, read N- to C-terminus: ATP-dependent protease ATPase subunit HslU (444 aa).

ATP-binding positions include I18 and 60-65 (GVGKTE). A disordered region spans residues 143–163 (WGEVESHDSHSSTRQAFRKKL). 3 residues coordinate ATP: D257, E322, and R394.

Belongs to the ClpX chaperone family. HslU subfamily. A double ring-shaped homohexamer of HslV is capped on each side by a ring-shaped HslU homohexamer. The assembly of the HslU/HslV complex is dependent on binding of ATP.

The protein localises to the cytoplasm. In terms of biological role, ATPase subunit of a proteasome-like degradation complex; this subunit has chaperone activity. The binding of ATP and its subsequent hydrolysis by HslU are essential for unfolding of protein substrates subsequently hydrolyzed by HslV. HslU recognizes the N-terminal part of its protein substrates and unfolds these before they are guided to HslV for hydrolysis. The protein is ATP-dependent protease ATPase subunit HslU of Haemophilus influenzae (strain PittEE).